Reading from the N-terminus, the 534-residue chain is Replication factor C large subunit (534 aa).

45 to 52 serves as a coordination point for ATP; it reads GPPGIGKT. The segment covering 444–463 has biased composition (basic and acidic residues); the sequence is KNKKEIKVKTKKDTVEDSSK. The disordered stretch occupies residues 444 to 534; that stretch reads KNKKEIKVKT…KSRQTTLFDF (91 aa). Low complexity predominate over residues 488-510; the sequence is SSNSTTKNKTESPKNSSKTSSKT. Positions 517-527 are enriched in basic residues; the sequence is TSKKNNKKKSR.

This sequence belongs to the activator 1 small subunits family. RfcL subfamily. Heteromultimer composed of small subunits (RfcS) and large subunits (RfcL).

Part of the RFC clamp loader complex which loads the PCNA sliding clamp onto DNA. This Methanosphaera stadtmanae (strain ATCC 43021 / DSM 3091 / JCM 11832 / MCB-3) protein is Replication factor C large subunit.